The primary structure comprises 631 residues: ATP-dependent RNA helicase mrh4, mitochondrial (631 aa).

Residues 1–39 (MYPLGRVSLPVRSPVCLFCQNRTSSLLPSAYVWQSARTM) constitute a mitochondrion transit peptide. The tract at residues 55–111 (PNVAKTSLKKKRNDTDRFGPFAGMNQTEARIRDDPRSRSPASLKRSKAPSDESGRKD) is disordered. Residues 102–111 (APSDESGRKD) show a composition bias toward basic and acidic residues. The Q motif motif lies at 143–176 (TSFDQFPLLPVVRHSIFSQALPGLHDVTPTPIQR). The segment at 181-200 (RLLDDTNKDKKPKKRAEGEP) is disordered. Residues 196–408 (AEGEPEYDQY…RKKYPDIQRL (213 aa)) enclose the Helicase ATP-binding domain. 209 to 216 (AETGSGKT) lines the ATP pocket. Residues 355–358 (DEAD) carry the DEAD box motif. Positions 442–631 (DVIWSIGKAG…EGMFRGQALI (190 aa)) constitute a Helicase C-terminal domain.

This sequence belongs to the DEAD box helicase family. MRH4 subfamily.

The protein localises to the mitochondrion. It carries out the reaction ATP + H2O = ADP + phosphate + H(+). ATP-binding RNA helicase involved in mitochondrial RNA metabolism. Required for maintenance of mitochondrial DNA. This is ATP-dependent RNA helicase mrh4, mitochondrial (mrh4) from Aspergillus terreus (strain NIH 2624 / FGSC A1156).